A 678-amino-acid chain; its full sequence is Glycine--tRNA ligase beta subunit (678 aa).

Belongs to the class-II aminoacyl-tRNA synthetase family. In terms of assembly, tetramer of two alpha and two beta subunits.

It is found in the cytoplasm. It catalyses the reaction tRNA(Gly) + glycine + ATP = glycyl-tRNA(Gly) + AMP + diphosphate. The chain is Glycine--tRNA ligase beta subunit from Streptococcus pneumoniae (strain ATCC BAA-255 / R6).